We begin with the raw amino-acid sequence, 554 residues long: MSSSIPPRLYDMSPTESKKQEDVSETELVYPVELADATIQPSKSDDDLFDSNDFSKTYLAKSRILSNAMNEIGFGRYQWYLFFVAGFGWMSDNIWPVCTSLILMRLDEVDGPHPPAEGRAPYLTLSQNLGLLVGAMVWSLSADTIGRRWAFNLTFLFTGVFAVIAGASPNFASICVFDALWSFGVGGNLPVDSAIFLEALPSSHQWLLTVMSFWWAIGQVIANLVSWGLISNFSCPDDESVCHRADNKGWRYFLFTMGGMTLLMFAARFLVSVYESPKFYLAKGDDYKAVETIHKIARINGKTCTLTVEELYAIDRQEQEESDLDDSKSSDAKSVTQGTTNLIVEKLRKYNFEHIRQCFGSRKLAISSILVILSWAVIGLAFPLYNAFLPYYLETRGNANEPLSVAKTYRNSLIVSAIGVPGSLIAGVLVEFRIGRKGTLCLSLILTGVFLFASTTAKTSNAYLGWNCTFSFFSDIMYGVLYAYTPEVFPSKVRGTAVGLAASANRILGIFSPVIAMRANLTTSAPIFVSGALFIFAGILVVFFPYEPRGKSSF.

The disordered stretch occupies residues 1 to 25; the sequence is MSSSIPPRLYDMSPTESKKQEDVSE. Residue Ser13 is modified to Phosphoserine. Transmembrane regions (helical) follow at residues 82–102, 120–140, 149–169, 171–191, 210–230, and 253–273; these read FFVA…TSLI, APYL…VWSL, WAFN…GASP, FASI…NLPV, VMSF…WGLI, and FLFT…LVSV. Ser334 carries the phosphoserine modification. 6 consecutive transmembrane segments (helical) span residues 364–384, 412–432, 437–457, 462–482, 497–517, and 525–545; these read LAIS…AFPL, SLIV…LVEF, KGTL…STTA, AYLG…GVLY, AVGL…VIAM, and APIF…VFFP.

It belongs to the major facilitator superfamily.

It localises to the endoplasmic reticulum. Its subcellular location is the membrane. This is an uncharacterized protein from Schizosaccharomyces pombe (strain 972 / ATCC 24843) (Fission yeast).